We begin with the raw amino-acid sequence, 773 residues long: Carnitine O-palmitoyltransferase 1, liver isoform (773 aa).

Position 2 is an N-acetylalanine (Ala2). The Cytoplasmic segment spans residues 2–47 (AEAHQAVAFQFTVTPDGIDLRLSHEALRQIYLSGLHSWKKKFIRFK). A helical transmembrane segment spans residues 48–73 (NGIITGVYPASPSSWLIVVVGVMTTM). Residues 74-102 (YAKIDPSLGIIAKINRTLETANCMSSQTK) lie on the Mitochondrial intermembrane side of the membrane. The chain crosses the membrane as a helical span at residues 103-122 (NVVSGVLFGTGLWVALIVTM). Residues 123 to 773 (RYSLKVLLSY…LFGLSSNSKK (651 aa)) are Cytoplasmic-facing. Residue Tyr282 is modified to 3'-nitrotyrosine. The active-site Proton acceptor is the His473. 555–567 (GKGIIKKCRTSPD) is a CoA binding site. Position 588 is a phosphothreonine (Thr588). At Tyr589 the chain carries 3'-nitrotyrosine. (R)-carnitine contacts are provided by Tyr589 and Thr602. Thr604 carries the phosphothreonine modification. Phosphoserine is present on residues Ser741 and Ser747.

Belongs to the carnitine/choline acetyltransferase family. Homohexamer and homotrimer. Identified in a complex that contains at least CPT1A, ACSL1 and VDAC1. Also identified in complexes with ACSL1 and VDAC2 and VDAC3. Interacts with ZDHHC4. As to expression, strong expression in kidney and heart, and lower in liver and skeletal muscle.

It is found in the mitochondrion outer membrane. The catalysed reaction is (R)-carnitine + hexadecanoyl-CoA = O-hexadecanoyl-(R)-carnitine + CoA. It catalyses the reaction succinyl-CoA + L-lysyl-[protein] = N(6)-succinyl-L-lysyl-[protein] + CoA + H(+). It functions in the pathway lipid metabolism; fatty acid beta-oxidation. Inhibited by malonyl-CoA. Functionally, catalyzes the transfer of the acyl group of long-chain fatty acid-CoA conjugates onto carnitine, an essential step for the mitochondrial uptake of long-chain fatty acids and their subsequent beta-oxidation in the mitochondrion. Also possesses a lysine succinyltransferase activity that can regulate enzymatic activity of substrate proteins such as ENO1 and metabolism independent of its classical carnitine O-palmitoyltransferase activity. Plays an important role in hepatic triglyceride metabolism. Also plays a role in inducible regulatory T-cell (iTreg) differentiation once activated by butyryl-CoA that antagonizes malonyl-CoA-mediated CPT1A repression. Sustains the IFN-I response by recruiting ZDHCC4 to palmitoylate MAVS at the mitochondria leading to MAVS stabilization and activation. Promotes ROS-induced oxidative stress in liver injury via modulation of NFE2L2 and NLRP3-mediated signaling pathways. The protein is Carnitine O-palmitoyltransferase 1, liver isoform of Homo sapiens (Human).